The chain runs to 755 residues: Biodegradative arginine decarboxylase (755 aa).

Lys-386 is subject to N6-(pyridoxal phosphate)lysine.

Belongs to the Orn/Lys/Arg decarboxylase class-I family. As to quaternary structure, homodecamer. The basic unit is a homodimer, organized into a ring of giving a pentamer of five homodimers. The cofactor is pyridoxal 5'-phosphate.

The protein localises to the cytoplasm. The enzyme catalyses L-arginine + H(+) = agmatine + CO2. With respect to regulation, homodimers are probably inactive, their assembly into a homodecamer at low pH requires neutralization of negatively charged residues. This uses cytoplasmic protons, contributing pH regulation and stabilizes the homodecamer. Component of the acid-resistance (AR) system allowing enteric pathogens to survive the acidic environment in the stomach. ADC can be found in two forms: biodegradative (this enzyme) and biosynthetic (speA). The biodegradative form plays a role in regulating pH by consuming proteins. Converts arginine imported by AdiC to agmatine which is then exported by AdiC. The protein is Biodegradative arginine decarboxylase (adiA) of Escherichia coli (strain K12).